Here is a 167-residue protein sequence, read N- to C-terminus: MPAFLNPAEAEFWVGAGLLIFLGIVFFGAKAHKAIAAALDAKAASIQANLDEAARIRDEARRLLEGLQAERAEAERQAKEMLATAEVQVRQFEAEAKAKLEEAIERRRRMAEQKIATAEAQAAAEVKAAAAELAAQMAESVLAQRLTGAKADPLVDRAIGQLASKLQ.

The chain crosses the membrane as a helical span at residues alanine 8–glycine 28.

The protein belongs to the ATPase B chain family. As to quaternary structure, F-type ATPases have 2 components, F(1) - the catalytic core - and F(0) - the membrane proton channel. F(1) has five subunits: alpha(3), beta(3), gamma(1), delta(1), epsilon(1). F(0) has three main subunits: a(1), b(2) and c(10-14). The alpha and beta chains form an alternating ring which encloses part of the gamma chain. F(1) is attached to F(0) by a central stalk formed by the gamma and epsilon chains, while a peripheral stalk is formed by the delta and b chains.

The protein localises to the cell inner membrane. Functionally, f(1)F(0) ATP synthase produces ATP from ADP in the presence of a proton or sodium gradient. F-type ATPases consist of two structural domains, F(1) containing the extramembraneous catalytic core and F(0) containing the membrane proton channel, linked together by a central stalk and a peripheral stalk. During catalysis, ATP synthesis in the catalytic domain of F(1) is coupled via a rotary mechanism of the central stalk subunits to proton translocation. Component of the F(0) channel, it forms part of the peripheral stalk, linking F(1) to F(0). The protein is ATP synthase subunit b of Phenylobacterium zucineum (strain HLK1).